Reading from the N-terminus, the 336-residue chain is Fimbrial adhesin PapGII (336 aa).

Residues 1-20 (MKKWFPALLFSLCVSGESSA) form the signal peptide. 2 cysteine pairs are disulfide-bonded: C64/C138 and C217/C249. D-galactose-binding positions include E79 and 124 to 127 (GYKW).

The protein belongs to the adhesin PapG family.

The protein localises to the secreted. It localises to the fimbrium. Functionally, tip adhesin component of type P pili that plays a critical role in kidney infection through targeted interaction with the globoseries glycolipids containing the Gal-alpha(1-4)-Gal disaccharide present on uroepithelial cells. In turn, transcriptionally regulates host gene expression in kidney cells, leading to inflammatory pathway activation and renal tissue damage. Acts thereby as key determinant of invasive uropathogenic E.coli (UPEC), which cause pyelonephritis and urinary-source bacteremia. This chain is Fimbrial adhesin PapGII, found in Escherichia coli O6:H1 (strain CFT073 / ATCC 700928 / UPEC).